A 95-amino-acid polypeptide reads, in one-letter code: Small ribosomal subunit protein uS19 (95 aa).

The disordered stretch occupies residues Glu-73–Lys-95.

It belongs to the universal ribosomal protein uS19 family.

Its function is as follows. Protein S19 forms a complex with S13 that binds strongly to the 16S ribosomal RNA. This is Small ribosomal subunit protein uS19 from Deinococcus deserti (strain DSM 17065 / CIP 109153 / LMG 22923 / VCD115).